The sequence spans 98 residues: NADH-ubiquinone oxidoreductase chain 4L (98 aa).

Transmembrane regions (helical) follow at residues Met1–Met21, Ser29–Leu49, and Ile61–Ile81.

This sequence belongs to the complex I subunit 4L family. As to quaternary structure, core subunit of respiratory chain NADH dehydrogenase (Complex I) which is composed of 45 different subunits.

The protein resides in the mitochondrion inner membrane. It carries out the reaction a ubiquinone + NADH + 5 H(+)(in) = a ubiquinol + NAD(+) + 4 H(+)(out). Functionally, core subunit of the mitochondrial membrane respiratory chain NADH dehydrogenase (Complex I) which catalyzes electron transfer from NADH through the respiratory chain, using ubiquinone as an electron acceptor. Part of the enzyme membrane arm which is embedded in the lipid bilayer and involved in proton translocation. In Ceratotherium simum (White rhinoceros), this protein is NADH-ubiquinone oxidoreductase chain 4L (MT-ND4L).